The chain runs to 390 residues: Protein SOSEKI 4 (390 aa).

Positions 22-115 are DIX-like oligomerization domain; the sequence is RMAEVLYVLS…YALKATKRFD (94 aa). Disordered stretches follow at residues 210 to 247 and 291 to 321; these read KSNS…NRTG and RESN…SGGS. A compositionally biased stretch (polar residues) spans 304–321; sequence PSVQAETHVSKLSKSGGS.

This sequence belongs to the SOSEKI family. Homodimer. Forms long polymer filaments with other SOKs proteins polymers crucial for polar localization and biological activity.

It is found in the cell membrane. Its function is as follows. SOSEKI proteins locally interpret global polarity cues and can influence cell division orientation to coordinate cell polarization relative to body axes. In Physcomitrium patens (Spreading-leaved earth moss), this protein is Protein SOSEKI 4.